Here is a 161-residue protein sequence, read N- to C-terminus: Large ribosomal subunit protein eL21 (161 aa).

This sequence belongs to the eukaryotic ribosomal protein eL21 family.

The protein is Large ribosomal subunit protein eL21 (RPL21) of Cyanophora paradoxa.